Here is a 1154-residue protein sequence, read N- to C-terminus: Kinesin-like protein KIN-7E, chloroplastic (1154 aa).

Low complexity-rich tracts occupy residues 1–14 (MSSS…SISP) and 29–109 (VAAA…PPVA). The transit peptide at 1-21 (MSSSSRPGRASISPFRSRRTS) directs the protein to the chloroplast. The segment at 1–109 (MSSSSRPGRA…RAAGRAPPVA (109 aa)) is disordered. The Kinesin motor domain occupies 119–437 (NIMVTVRFRP…LKFAHRSKHI (319 aa)). 199 to 206 (GVTSSGKT) lines the ATP pocket. The stretch at 441 to 523 (ASQNKIIDEK…AALMGRIQRL (83 aa)) forms a coiled coil. The segment at 620 to 674 (LSTSVDSESTASGSPSFSRSSQQKHPLLDLKDGRRKSMTRKGDDPALTDSFPGRT) is disordered. Positions 628-640 (STASGSPSFSRSS) are enriched in low complexity. 2 coiled-coil regions span residues 734–761 (DSQI…LEQR) and 801–845 (ADNR…DNVA). The tract at residues 838-885 (AKNEDNVASMQSSEPSSTSSNPRDLANEVASHSKMPSRTTEDHTESPL) is disordered. The span at 846–857 (SMQSSEPSSTSS) shows a compositional bias: low complexity. The stretch at 894-967 (AEIENLKLDK…DLAAAKDQTR (74 aa)) forms a coiled coil.

The protein belongs to the TRAFAC class myosin-kinesin ATPase superfamily. Kinesin family. KIN-7 subfamily.

Its subcellular location is the plastid. The protein resides in the chloroplast. The polypeptide is Kinesin-like protein KIN-7E, chloroplastic (Oryza sativa subsp. japonica (Rice)).